The primary structure comprises 193 residues: Selenate reductase assembly chaperone protein (193 aa).

This sequence belongs to the type II DMSO reductase enzyme chaperone family.

It is found in the cytoplasm. Functionally, may function as a system-specific chaperone protein essential for the assembly of an active selenate reductase SerABC. In Thauera selenatis, this protein is Selenate reductase assembly chaperone protein.